We begin with the raw amino-acid sequence, 898 residues long: Alanine--tRNA ligase (898 aa).

The Zn(2+) site is built by His589, His593, Cys693, and His697.

The protein belongs to the class-II aminoacyl-tRNA synthetase family. Zn(2+) is required as a cofactor.

The protein resides in the cytoplasm. It catalyses the reaction tRNA(Ala) + L-alanine + ATP = L-alanyl-tRNA(Ala) + AMP + diphosphate. Functionally, catalyzes the attachment of alanine to tRNA(Ala) in a two-step reaction: alanine is first activated by ATP to form Ala-AMP and then transferred to the acceptor end of tRNA(Ala). Also edits incorrectly charged Ser-tRNA(Ala) and Gly-tRNA(Ala) via its editing domain. In Methanothermobacter thermautotrophicus (strain ATCC 29096 / DSM 1053 / JCM 10044 / NBRC 100330 / Delta H) (Methanobacterium thermoautotrophicum), this protein is Alanine--tRNA ligase.